The primary structure comprises 562 residues: Nucleoprotein (562 aa).

The tract at residues 53–238 (MRRVKRDDSD…ITQEESQINI (186 aa)) is binding site for the cap structure m7GTP. Mn(2+) contacts are provided by aspartate 381 and glutamate 383. 4 residues coordinate Zn(2+): glutamate 391, cysteine 498, histidine 501, and cysteine 522. Aspartate 526 serves as a coordination point for Mn(2+).

The protein belongs to the arenaviridae nucleocapsid protein family. Homomultimerizes to form the nucleocapsid. Binds to viral genomic RNA. Interacts with glycoprotein G2. Interacts with protein Z; this interaction probably directs the encapsidated genome to budding sites. Interacts with protein L; this interaction does not interfere with Z-L interaction. Interacts with host IKBKE (via Protein kinase domain); the interaction inhibits IKBKE kinase activity.

It is found in the virion. Its subcellular location is the host cytoplasm. Its function is as follows. Encapsidates the genome, protecting it from nucleases. The encapsidated genomic RNA is termed the nucleocapsid (NC). Serves as template for viral transcription and replication. The increased presence of protein N in host cell does not seem to trigger the switch from transcription to replication as observed in other negative strain RNA viruses. Through the interaction with host IKBKE, strongly inhibits the phosphorylation and nuclear translocation of host IRF3, a protein involved in interferon activation pathway, leading to the inhibition of interferon-beta and IRF3-dependent promoters activation. Also encodes a functional 3'-5' exoribonuclease that degrades preferentially dsRNA substrates and thereby participates in the suppression of interferon induction. The chain is Nucleoprotein from Neotoma (wood rats).